The chain runs to 237 residues: 2,3-bisphosphoglycerate-dependent phosphoglycerate mutase (237 aa).

Residues 10–17 (RHGESKWN), 23–24 (TG), R62, 89–92 (ERHY), K100, 116–117 (RR), and 185–186 (GN) contribute to the substrate site. H11 acts as the Tele-phosphohistidine intermediate in catalysis. Catalysis depends on E89, which acts as the Proton donor/acceptor.

This sequence belongs to the phosphoglycerate mutase family. BPG-dependent PGAM subfamily. Homodimer.

It carries out the reaction (2R)-2-phosphoglycerate = (2R)-3-phosphoglycerate. It participates in carbohydrate degradation; glycolysis; pyruvate from D-glyceraldehyde 3-phosphate: step 3/5. In terms of biological role, catalyzes the interconversion of 2-phosphoglycerate and 3-phosphoglycerate. In Baumannia cicadellinicola subsp. Homalodisca coagulata, this protein is 2,3-bisphosphoglycerate-dependent phosphoglycerate mutase.